The sequence spans 396 residues: Tryptophan synthase beta chain (396 aa).

Lys86 is subject to N6-(pyridoxal phosphate)lysine.

The protein belongs to the TrpB family. In terms of assembly, tetramer of two alpha and two beta chains. Pyridoxal 5'-phosphate is required as a cofactor.

The catalysed reaction is (1S,2R)-1-C-(indol-3-yl)glycerol 3-phosphate + L-serine = D-glyceraldehyde 3-phosphate + L-tryptophan + H2O. Its pathway is amino-acid biosynthesis; L-tryptophan biosynthesis; L-tryptophan from chorismate: step 5/5. Functionally, the beta subunit is responsible for the synthesis of L-tryptophan from indole and L-serine. The sequence is that of Tryptophan synthase beta chain from Pectobacterium atrosepticum (strain SCRI 1043 / ATCC BAA-672) (Erwinia carotovora subsp. atroseptica).